We begin with the raw amino-acid sequence, 76 residues long: Small ribosomal subunit protein bS18 (76 aa).

This sequence belongs to the bacterial ribosomal protein bS18 family. In terms of assembly, part of the 30S ribosomal subunit. Forms a tight heterodimer with protein bS6.

Functionally, binds as a heterodimer with protein bS6 to the central domain of the 16S rRNA, where it helps stabilize the platform of the 30S subunit. The polypeptide is Small ribosomal subunit protein bS18 (Psychrobacter arcticus (strain DSM 17307 / VKM B-2377 / 273-4)).